The sequence spans 234 residues: tRNA (guanine-N(1)-)-methyltransferase (234 aa).

Residues glycine 115 and 135–140 (VGDYIL) contribute to the S-adenosyl-L-methionine site.

Belongs to the RNA methyltransferase TrmD family. In terms of assembly, homodimer.

It localises to the cytoplasm. It catalyses the reaction guanosine(37) in tRNA + S-adenosyl-L-methionine = N(1)-methylguanosine(37) in tRNA + S-adenosyl-L-homocysteine + H(+). Functionally, specifically methylates guanosine-37 in various tRNAs. The protein is tRNA (guanine-N(1)-)-methyltransferase of Rickettsia akari (strain Hartford).